The following is a 354-amino-acid chain: uncharacterized protein (354 aa).

Positions 1 to 21 are cleaved as a signal peptide; the sequence is MRYLLIVITFFMGFSSLPAWA.

It to E.coli YbgO.

In terms of biological role, may be involved in a fimbrial system chaperoned by YqiH and exported by YqiG. This is an uncharacterized protein from Escherichia coli (strain K12).